Here is a 468-residue protein sequence, read N- to C-terminus: UDP-N-acetylmuramate--L-alanine ligase (468 aa).

Residue 121-127 (GSHGKTT) coordinates ATP.

This sequence belongs to the MurCDEF family.

Its subcellular location is the cytoplasm. The enzyme catalyses UDP-N-acetyl-alpha-D-muramate + L-alanine + ATP = UDP-N-acetyl-alpha-D-muramoyl-L-alanine + ADP + phosphate + H(+). It functions in the pathway cell wall biogenesis; peptidoglycan biosynthesis. Cell wall formation. This chain is UDP-N-acetylmuramate--L-alanine ligase, found in Borrelia garinii subsp. bavariensis (strain ATCC BAA-2496 / DSM 23469 / PBi) (Borreliella bavariensis).